We begin with the raw amino-acid sequence, 205 residues long: DNA-directed RNA polymerase RPB5 homolog (205 aa).

This sequence belongs to the archaeal RpoH/eukaryotic RPB5 RNA polymerase subunit family. As to quaternary structure, part of the viral DNA-directed RNA polymerase that consists of 8 polII-like subunits (RPB1, RPB2, RPB3, RPB5, RPB6, RPB7, RPB9, RPB10), a capping enzyme and a termination factor.

It is found in the host cytoplasm. It localises to the virion. Its function is as follows. Component of the DNA-directed RNA polymerase (RNAP) that catalyzes the transcription in the cytoplasm of viral DNA into RNA using the four ribonucleoside triphosphates as substrates. The chain is DNA-directed RNA polymerase RPB5 homolog from African swine fever virus (isolate Pig/Kenya/KEN-50/1950) (ASFV).